A 154-amino-acid chain; its full sequence is SsrA-binding protein (154 aa).

The protein belongs to the SmpB family.

The protein resides in the cytoplasm. Required for rescue of stalled ribosomes mediated by trans-translation. Binds to transfer-messenger RNA (tmRNA), required for stable association of tmRNA with ribosomes. tmRNA and SmpB together mimic tRNA shape, replacing the anticodon stem-loop with SmpB. tmRNA is encoded by the ssrA gene; the 2 termini fold to resemble tRNA(Ala) and it encodes a 'tag peptide', a short internal open reading frame. During trans-translation Ala-aminoacylated tmRNA acts like a tRNA, entering the A-site of stalled ribosomes, displacing the stalled mRNA. The ribosome then switches to translate the ORF on the tmRNA; the nascent peptide is terminated with the 'tag peptide' encoded by the tmRNA and targeted for degradation. The ribosome is freed to recommence translation, which seems to be the essential function of trans-translation. In Gluconacetobacter diazotrophicus (strain ATCC 49037 / DSM 5601 / CCUG 37298 / CIP 103539 / LMG 7603 / PAl5), this protein is SsrA-binding protein.